The following is a 207-amino-acid chain: Nitrophorin-1 (207 aa).

The signal sequence occupies residues 1–23 (MKSYTALLAVAILCLFAAVGVSG). 2 cysteine pairs are disulfide-bonded: Cys-25/Cys-145 and Cys-64/Cys-194. Heme is bound at residue His-82.

It belongs to the calycin superfamily. Nitrophorin family. Salivary gland (at protein level).

The protein resides in the secreted. Its function is as follows. Heme-based protein that deliver nitric oxide gas (NO) to the victim while feeding, resulting in vasodilation and inhibition of platelet aggregation. Reversibly binds nitric oxide (NO). Also binds tightly to histamine, which is released by the host to induce wound healing. The protein is Nitrophorin-1 of Rhodnius prolixus (Triatomid bug).